Consider the following 506-residue polypeptide: 2-isopropylmalate synthase (506 aa).

The region spanning 4-266 (ILFMDTTLRD…EPSMTLKEIK (263 aa)) is the Pyruvate carboxyltransferase domain. Asp-13, His-201, His-203, and Asn-237 together coordinate Mn(2+). The regulatory domain stretch occupies residues 390-506 (NITQLQVHFV…KLKSFIQLVK (117 aa)).

This sequence belongs to the alpha-IPM synthase/homocitrate synthase family. LeuA type 1 subfamily. In terms of assembly, homodimer. It depends on Mn(2+) as a cofactor.

The protein resides in the cytoplasm. The catalysed reaction is 3-methyl-2-oxobutanoate + acetyl-CoA + H2O = (2S)-2-isopropylmalate + CoA + H(+). The protein operates within amino-acid biosynthesis; L-leucine biosynthesis; L-leucine from 3-methyl-2-oxobutanoate: step 1/4. Catalyzes the condensation of the acetyl group of acetyl-CoA with 3-methyl-2-oxobutanoate (2-ketoisovalerate) to form 3-carboxy-3-hydroxy-4-methylpentanoate (2-isopropylmalate). This is 2-isopropylmalate synthase from Bacillus cereus (strain 03BB102).